The chain runs to 159 residues: Ribosomal RNA large subunit methyltransferase H (159 aa).

Residues leucine 76, glycine 108, and 127–132 (FGLLTL) contribute to the S-adenosyl-L-methionine site.

Belongs to the RNA methyltransferase RlmH family. Homodimer.

It is found in the cytoplasm. It carries out the reaction pseudouridine(1915) in 23S rRNA + S-adenosyl-L-methionine = N(3)-methylpseudouridine(1915) in 23S rRNA + S-adenosyl-L-homocysteine + H(+). Its function is as follows. Specifically methylates the pseudouridine at position 1915 (m3Psi1915) in 23S rRNA. The chain is Ribosomal RNA large subunit methyltransferase H from Streptococcus pyogenes serotype M6 (strain ATCC BAA-946 / MGAS10394).